We begin with the raw amino-acid sequence, 1577 residues long: MADRGVDLAALPKEVREQLAELELELSEGDITQKGYEKKRAKLLAPFVPQTQNVDVSILSTDSTSSPITIPIAAPRQHRAHRSGGTRDDRYRSDIHTEAVQAALARHKEEKMALPMPTKRRSAFVQSPAENCTPPDTSSASEDEGSLRRRQAAISAMLAQNLQSPEYWINRSVQGSSTSSSASSTLSHGDGKTHNHNNHSQGQTSALADVLAHTRIDTNSSSGSVPPDVTSTAPQDRNSRVDLPANIAVKGISRGQSRSSMMDTAGGVPAHSRVSTKIQQLLNTLKRPKRPPLSEFFLDDSEEIVEVPQPDPNTPRPEGRQIIPVKGEPLGVVSNWPPALQAALARWGATQAKSPALTALDITGKPLYTLTYGKLWSRSLKLAYTLLNKLGTKNEPVLKPGDRVALVYPNSDPGMFWVAFYGCLLAEVIPVPIEVPLSRKDAGSQQIGFLLGSCGVGLALTSEVCLKGLPKTPNGEIMQFKGWPRLKWVVTDTKYLTKPSKDWQPHIPTANTDTAYIEYKASKEGTVMGVAVSKISMLTHCQALTQACNYCEGETLVNVLDFKKDSGLWHGVLTSVMNRIHTISVPYAVMKACPLSWVQRVHVHKARVALVKCRDLHWAMMAHRDQKDTNLSSLRMLIVADGANPWSVSSCDAFLNVFQSHGLKPEMICPCASSPEAMTVAIRRPGAPGTPLPARAILSMAGLSHGVIRVNTEDKNSALTVQDVGHVMPGALMCIVKPDGPPMLCKTDEIGEIVLNSRAGGTMYYGLPGVTKNTFEVIPVNSGGTPIGDVPFTRTGLLGFVGPGSLVFVVGKIEGLLSVSGRRHNADDLVATALAVEPVKTVYRGRIAVFSVTVFYDERVVIVAEQRPDANEEDSFQWMSRVLQAIDSIHQVGLYCLALVPANTLPKTPLGGIHVSETKHHFLEGSLHPCNILMCPHTCVTNLPKPRQKQPVGVGPASIMVGNLVAGKRIAQASGRDLGLIDDQEQSRKHQFLSEALQWRAQTDPDHVLYMLLNAKGVAVSTATCSQLHKRAEKITAALLERGGINTGDNVVLLYPPGIDLIASFYGCLYAGCIPVTVRPPHPQNLSATLPTVRMIIDVSKAACILTTQTLMKTLRSKEAAASVNVKTWPNIIDTDDLPRKRPASIYKPPTAEMLAYLDFSVSTTGMLTGVKMSHSAVNALCRSIKLQCELYSSRQIAICMDPYCGLGFVLWCLSSVYSGHQSILIPPMELETSLPLWLSTLSQYKIRDTFCSYSVMELCTKGLGTQTEALKARNVNLSCVRSCVVIAEERPRLALTQSFSKLFKDLGLSPRAVSTAFGSRVNLAICLQGTAGPDPSTVYVDMKSLRHDRVRLVERGAPQSLPLMESGTMLPGVRVIIVNPETKGPLGDSHLGEIWVNSPHNASGYYTIYGEESLQADHFNTRLSFGDTETLWARTGYLGFVKRTELLDASGDRHDALFVVGSLDETLELRGLRYHPIDIETSVSRAHRSIAESAVFTWTNLLVVVVELSGSEQEALDLVPLVTNVVLKEHHLIVGVVVIVDPGVIPINSRGEKQRMHLRDSFLADQLDPIYVAYNM.

The DMAP1-binding domain occupies 7-124; that stretch reads DLAALPKEVR…PMPTKRRSAF (118 aa). Disordered regions lie at residues 109-148, 173-204, 217-239, and 253-273; these read EEKM…GSLR, VQGS…QGQT, DTNS…DRNS, and SRGQ…AHSR. A compositionally biased stretch (polar residues) spans 124–140; the sequence is FVQSPAENCTPPDTSSA. Positions 176-187 are enriched in low complexity; the sequence is SSTSSSASSTLS. Residues 217 to 236 are compositionally biased toward polar residues; the sequence is DTNSSSGSVPPDVTSTAPQD.

This sequence belongs to the DIP2 family.

The protein resides in the cell projection. Its subcellular location is the dendrite. It localises to the axon. The protein localises to the perikaryon. In terms of biological role, negatively regulates axonal outgrowth and is essential for normal synaptic transmission. Not required for regulation of axon polarity. Promotes acetylation of alpha-tubulin. The chain is Disco-interacting protein 2 homolog B-A (dip2ba) from Danio rerio (Zebrafish).